The chain runs to 67 residues: Large ribosomal subunit protein bL35 (67 aa).

Belongs to the bacterial ribosomal protein bL35 family.

This chain is Large ribosomal subunit protein bL35, found in Mesorhizobium japonicum (strain LMG 29417 / CECT 9101 / MAFF 303099) (Mesorhizobium loti (strain MAFF 303099)).